The following is a 743-amino-acid chain: Pentatricopeptide repeat-containing protein At2g16880 (743 aa).

PPR repeat units follow at residues 130–164 (SKALFDIALSAYLHEGKPHVALQIFQKMIRLKLKP), 165–202 (NLLTCNTLLIGLVRYPSSFSISSAREVFDDMVKIGVSL), 203–233 (NVQTFNVLVNGYCLEGKLEDALGMLERMVSE), 239–273 (DNVTYNTILKAMSKKGRLSDLKELLLDMKKNGLVP), 274–308 (NRVTYNNLVYGYCKLGSLKEAFQIVELMKQTNVLP), 309–343 (DLCTYNILINGLCNAGSMREGLELMDAMKSLKLQP), 344–378 (DVVTYNTLIDGCFELGLSLEARKLMEQMENDGVKA), 379–414 (NQVTHNISLKWLCKEEKREAVTRKVKELVDMHGFSP), 415–449 (DIVTYHTLIKAYLKVGDLSGALEMMREMGQKGIKM), 450–484 (NTITLNTILDALCKERKLDEAHNLLNSAHKRGFIV), 485–519 (DEVTYGTLIMGFFREEKVEKALEMWDEMKKVKITP), 520–554 (TVSTFNSLIGGLCHHGKTELAMEKFDELAESGLLP), 555–589 (DDSTFNSIILGYCKEGRVEKAFEFYNESIKHSFKP), 590–620 (DNYTCNILLNGLCKEGMTEKALNFFNTLIEE), 624–658 (DTVTYNTMISAFCKDKKLKEAYDLLSEMEEKGLEP), and 659–689 (DRFTYNSFISLLMEDGKLSETDELLKKFSGK).

This sequence belongs to the PPR family. P subfamily.

The polypeptide is Pentatricopeptide repeat-containing protein At2g16880 (Arabidopsis thaliana (Mouse-ear cress)).